The primary structure comprises 460 residues: MLLRFYFNGLLFVGCLLSWGRSDTEEQCHTFTDLNIHNSIIGTGLKVQLLLYTRENPKCAQDLNVDNSTGFQYLNVTRRTVFITHGYRPTGSPPVWIDDIVKKFLDIQDFNVIVVDWNRGATTVLYHNAAANTRKVADILKRFIDNMLSQGATLDSIYMVGVSLGAHISGFVGKMYNGSIGRITGLDPAGPLFNGKPPEERLHYTDAQFVDVVHSDTDGLGYKESLGHIDFYPNGGTDQPGCPKTILAGSEYFKCDHQRSVFLYIASLTKSCDLVAFPCKSYRDYRIGNCTDCKEFLPLSCPVLGFYADKWKDHLVKRNHPGTTAFFDTAAKDPYCIFHYYLDFMTWSSQIRRGYITIKLTSLDGNVTESKLDKDAAVFEQYKEESLLAKFDQDMDPISRISVTFTTGSVIGPKYKLRVLRMRLRPFTNRNRPILCRYDFVLLENIETEFIPIPCEDTNL.

The N-terminal stretch at 1 to 24 (MLLRFYFNGLLFVGCLLSWGRSDT) is a signal peptide. N-linked (GlcNAc...) asparagine glycosylation is found at Asn-67 and Asn-75. The Nucleophile role is filled by Ser-163. An N-linked (GlcNAc...) asparagine glycan is attached at Asn-177. The active-site Charge relay system is Asp-187. Residues Cys-242 and Cys-255 are joined by a disulfide bond. His-257 (charge relay system) is an active-site residue. 2 disulfide bridges follow: Cys-279/Cys-290 and Cys-293/Cys-301. The N-linked (GlcNAc...) asparagine glycan is linked to Asn-289. Asn-366 carries N-linked (GlcNAc...) asparagine glycosylation. Cys-436 and Cys-455 are disulfide-bonded.

It belongs to the AB hydrolase superfamily. Lipase family.

The protein localises to the secreted. It is found in the cell membrane. It carries out the reaction 1-hexadecanoyl-2-(9Z-octadecenoyl)-sn-glycero-3-phosphate + H2O = 2-(9Z-octadecenoyl)-sn-glycero-3-phosphate + hexadecanoate + H(+). In terms of biological role, hydrolyzes specifically phosphatidic acid (PA) to produce 2-acyl lysophosphatidic acid (LPA; a potent bioactive lipid mediator) and fatty acid. Does not hydrolyze other phospholipids, like phosphatidylserine (PS), phosphatidylcholine (PC) and phosphatidylethanolamine (PE) or triacylglycerol (TG). The chain is Lipase member H (liph) from Xenopus tropicalis (Western clawed frog).